The following is a 185-amino-acid chain: Protein GrpE (185 aa).

Residues 1–22 form a disordered region; the sequence is MTASQEPVDQAPESNEPAPAVP.

This sequence belongs to the GrpE family. As to quaternary structure, homodimer.

It localises to the cytoplasm. In terms of biological role, participates actively in the response to hyperosmotic and heat shock by preventing the aggregation of stress-denatured proteins, in association with DnaK and GrpE. It is the nucleotide exchange factor for DnaK and may function as a thermosensor. Unfolded proteins bind initially to DnaJ; upon interaction with the DnaJ-bound protein, DnaK hydrolyzes its bound ATP, resulting in the formation of a stable complex. GrpE releases ADP from DnaK; ATP binding to DnaK triggers the release of the substrate protein, thus completing the reaction cycle. Several rounds of ATP-dependent interactions between DnaJ, DnaK and GrpE are required for fully efficient folding. This Bordetella petrii (strain ATCC BAA-461 / DSM 12804 / CCUG 43448) protein is Protein GrpE.